The chain runs to 813 residues: Ankyrin repeat domain-containing protein SOWAHB (813 aa).

2 disordered regions span residues 142-256 (SAAP…QSLS) and 400-436 (ETCG…DSHK). The span at 158–176 (MSEKARVNPSHWDTKRYYP) shows a compositional bias: basic and acidic residues. Over residues 177-189 (EDPPVPDSLPVSP) the composition is skewed to pro residues. Residues 191 to 202 (CTNTRQSSFTST) show a composition bias toward polar residues. The segment covering 208-244 (HSLSSNNLSSSFSSPESPGLVAKPYNASPSPAGSSPN) has biased composition (low complexity). The span at 245 to 256 (IREQTPKSQSLS) shows a compositional bias: polar residues. A compositionally biased stretch (acidic residues) spans 400-416 (ETCGSEESDSGEGGDCD). ANK repeat units follow at residues 657 to 686 (TGYT…KAGI) and 696 to 726 (NGYT…NVKV).

This sequence belongs to the SOWAH family.

In Xenopus laevis (African clawed frog), this protein is Ankyrin repeat domain-containing protein SOWAHB (sowahb).